Reading from the N-terminus, the 462-residue chain is Glycerol-3-phosphate acyltransferase ATS12, chloroplastic (462 aa).

The transit peptide at 1–82 (MFILSSSSST…DKESAQSAAT (82 aa)) directs the protein to the chloroplast. Residues 233 to 238 (HQTEAD) carry the HXXXXD motif motif.

The protein belongs to the GPAT/DAPAT family.

The protein resides in the plastid. The protein localises to the chloroplast stroma. The catalysed reaction is a fatty acyl-[ACP] + sn-glycerol 3-phosphate = a 1-acyl-sn-glycero-3-phosphate + holo-[ACP]. The enzyme catalyses sn-glycerol 3-phosphate + an acyl-CoA = a 1-acyl-sn-glycero-3-phosphate + CoA. It participates in phospholipid metabolism; CDP-diacylglycerol biosynthesis; CDP-diacylglycerol from sn-glycerol 3-phosphate: step 1/3. Its function is as follows. Esterifies the acyl-group from acyl-acyl carrier proteins (acyl-ACPs) to the sn-1 position of glycerol-3-phosphate. The physiological acyl donors in chloroplasts are acyl-ACPs, but acyl-CoAs are used as artificial donor for in vitro reactions. The enzyme from chilling-resistant plants discriminates against non-fluid palmitic acid and selects oleic acid whereas the enzyme from sensitive plants accepts both fatty acids. Squash is chilling-sensitive. Does not seem to discriminate between the acyl-ACP thioesters 18:1-ACP, 18:0-ACP and 16:0-ACP. Exhibits higher selectivity for 16:0-CoA than 18:1-CoA in vitro. This Cucurbita moschata (Winter crookneck squash) protein is Glycerol-3-phosphate acyltransferase ATS12, chloroplastic.